Consider the following 336-residue polypeptide: Biotin synthase (336 aa).

The Radical SAM core domain occupies 54-281; that stretch reads NAIQLSTLLS…KAMVRLSAGR (228 aa). Residues cysteine 69, cysteine 73, and cysteine 76 each coordinate [4Fe-4S] cluster. Positions 113, 144, 204, and 276 each coordinate [2Fe-2S] cluster.

The protein belongs to the radical SAM superfamily. Biotin synthase family. As to quaternary structure, homodimer. The cofactor is [4Fe-4S] cluster. Requires [2Fe-2S] cluster as cofactor.

The catalysed reaction is (4R,5S)-dethiobiotin + (sulfur carrier)-SH + 2 reduced [2Fe-2S]-[ferredoxin] + 2 S-adenosyl-L-methionine = (sulfur carrier)-H + biotin + 2 5'-deoxyadenosine + 2 L-methionine + 2 oxidized [2Fe-2S]-[ferredoxin]. Its pathway is cofactor biosynthesis; biotin biosynthesis; biotin from 7,8-diaminononanoate: step 2/2. In terms of biological role, catalyzes the conversion of dethiobiotin (DTB) to biotin by the insertion of a sulfur atom into dethiobiotin via a radical-based mechanism. The polypeptide is Biotin synthase (Burkholderia pseudomallei (strain 1710b)).